A 480-amino-acid chain; its full sequence is Reticulophagy regulator 1 (480 aa).

The span at Met-1–Ala-10 shows a compositional bias: basic and acidic residues. Residues Met-1–Glu-41 are disordered. Residues Met-1–Ala-43 lie on the Cytoplasmic side of the membrane. Residues Ala-44–Trp-64 form a helical membrane-spanning segment. Residues Arg-65–Ser-78 are Lumenal-facing. The interval Asp-67 to Phe-216 is reticulon homology domain. A helical transmembrane segment spans residues Leu-79–Val-99. At Tyr-100–His-101 the chain is on the cytoplasmic side. The chain crosses the membrane as a helical span at residues Leu-102–Ser-122. The Lumenal segment spans residues Arg-123–Thr-191. The residue at position 132 (Ser-132) is a Phosphoserine. A Phosphoserine; by CAMK2B modification is found at Ser-134. At Ser-136 the chain carries Phosphoserine. A helical membrane pass occupies residues Ile-192–Leu-212. Residues Cys-213–His-480 lie on the Cytoplasmic side of the membrane. The span at Phe-302–Asp-313 shows a compositional bias: polar residues. Residues Phe-302–Leu-348 form a disordered region. Over residues Asp-317–Ser-331 the composition is skewed to basic and acidic residues. The LIR motif signature appears at Asp-436–Leu-441. The segment at Glu-450–His-480 is disordered. The segment covering Gly-454–Leu-473 has biased composition (polar residues).

Belongs to the RETREG family. Homooligomer; oligomerization is enhanced following endoplasmic reticulum stress and is mediated by the reticulon homology domain. Interacts with ATG8 family modifier proteins MAP1LC3A, MAP1LC3B, GABARAP, GABARAPL1 and GABARAPL2. Phosphorylation at Ser-134 by CAMK2B enhances oligomerization and membrane scission and reticulophagy activity.

It localises to the golgi apparatus. The protein localises to the cis-Golgi network membrane. The protein resides in the endoplasmic reticulum membrane. Functionally, endoplasmic reticulum (ER)-anchored autophagy regulator which mediates ER delivery into lysosomes through sequestration into autophagosomes. Promotes membrane remodeling and ER scission via its membrane bending capacity and targets the fragments into autophagosomes via interaction with ATG8 family proteins. Active under basal conditions. Required for collagen quality control in a LIR motif-dependent manner. Required for long-term survival of nociceptive and autonomic ganglion neurons. The sequence is that of Reticulophagy regulator 1 from Rattus norvegicus (Rat).